Here is a 983-residue protein sequence, read N- to C-terminus: Inner tegument protein (983 aa).

Positions 474–983 (LNVNTHFAVQ…TSVSLPPASP (510 aa)) are interaction with large tegument protein. Positions 901-932 (APWESAPQPPRLRMTPDTDHEESTAGATSVPE) are disordered. Residues 914 to 923 (MTPDTDHEES) are compositionally biased toward basic and acidic residues.

This sequence belongs to the herpesviridae inner tegument protein family. In terms of assembly, interacts (via C-terminus) with the large tegument protein/LTP (via N-terminus).

Its subcellular location is the virion tegument. The protein resides in the host cytoplasm. The protein localises to the host nucleus. It localises to the host Golgi apparatus. It is found in the host trans-Golgi network. Plays an essential role in cytoplasmic secondary envelopment during viral egress. Interacts with the capsid via the large tegument protein/LTP and participates in its transport to the host trans-Golgi network (TGN) where secondary envelopment occurs. Modulates tegumentation and capsid accumulation at the viral assembly complex. In Homo sapiens (Human), this protein is Inner tegument protein (UL47).